A 357-amino-acid chain; its full sequence is Holliday junction branch migration complex subunit RuvB (357 aa).

Residues 1-27 are disordered; it reads MGRFSNADGPGDDADEREVTPALTVGE. Residues 1–195 are large ATPase domain (RuvB-L); sequence MGRFSNADGP…FGFTAHMDFY (195 aa). ATP is bound by residues Leu-34, Arg-35, Gly-76, Lys-79, Thr-80, Ser-81, 142 to 144, Arg-185, Tyr-195, and Arg-232; that span reads EDF. A Mg(2+)-binding site is contributed by Thr-80. Positions 196-266 are small ATPAse domain (RuvB-S); it reads EPAELERVLA…IAKYALEVYD (71 aa). The tract at residues 269–357 is head domain (RuvB-H); it reads ELGLDRLDRA…GGLGQVGLFE (89 aa). Residues Arg-324 and Arg-329 each contribute to the DNA site.

It belongs to the RuvB family. In terms of assembly, homohexamer. Forms an RuvA(8)-RuvB(12)-Holliday junction (HJ) complex. HJ DNA is sandwiched between 2 RuvA tetramers; dsDNA enters through RuvA and exits via RuvB. An RuvB hexamer assembles on each DNA strand where it exits the tetramer. Each RuvB hexamer is contacted by two RuvA subunits (via domain III) on 2 adjacent RuvB subunits; this complex drives branch migration. In the full resolvosome a probable DNA-RuvA(4)-RuvB(12)-RuvC(2) complex forms which resolves the HJ.

Its subcellular location is the cytoplasm. It catalyses the reaction ATP + H2O = ADP + phosphate + H(+). Functionally, the RuvA-RuvB-RuvC complex processes Holliday junction (HJ) DNA during genetic recombination and DNA repair, while the RuvA-RuvB complex plays an important role in the rescue of blocked DNA replication forks via replication fork reversal (RFR). RuvA specifically binds to HJ cruciform DNA, conferring on it an open structure. The RuvB hexamer acts as an ATP-dependent pump, pulling dsDNA into and through the RuvAB complex. RuvB forms 2 homohexamers on either side of HJ DNA bound by 1 or 2 RuvA tetramers; 4 subunits per hexamer contact DNA at a time. Coordinated motions by a converter formed by DNA-disengaged RuvB subunits stimulates ATP hydrolysis and nucleotide exchange. Immobilization of the converter enables RuvB to convert the ATP-contained energy into a lever motion, pulling 2 nucleotides of DNA out of the RuvA tetramer per ATP hydrolyzed, thus driving DNA branch migration. The RuvB motors rotate together with the DNA substrate, which together with the progressing nucleotide cycle form the mechanistic basis for DNA recombination by continuous HJ branch migration. Branch migration allows RuvC to scan DNA until it finds its consensus sequence, where it cleaves and resolves cruciform DNA. The chain is Holliday junction branch migration complex subunit RuvB from Mycolicibacterium gilvum (strain PYR-GCK) (Mycobacterium gilvum (strain PYR-GCK)).